The sequence spans 516 residues: Adenosine deaminase (516 aa).

The N-terminal stretch at 1–20 (MFPRLIVWLLAASAVHAVLD) is a signal peptide.

It belongs to the metallo-dependent hydrolases superfamily. Adenosine and AMP deaminases family. ADGF subfamily. Zn(2+) serves as cofactor. As to expression, salivary gland (at protein level).

It localises to the secreted. The enzyme catalyses adenosine + H2O + H(+) = inosine + NH4(+). Its function is as follows. Catalyzes the deamination of adenosine to inosine. The sequence is that of Adenosine deaminase from Phlebotomus duboscqi (Sandfly).